A 99-amino-acid chain; its full sequence is MSSQQSAVSAKGFSKGSSQGPAPCPAPAPTPAPASSSSCCGSGRGCCGDSGCCGSSSTSCCCFPRRRRRQRSSGCCCCGGGSQRSQRSNNRSSGCCSGC.

Disordered stretches follow at residues 1–42 (MSSQ…CCGS) and 65–99 (RRRRRQRSSGCCCCGGGSQRSQRSNNRSSGCCSGC). The segment covering 22-32 (APCPAPAPTPA) has biased composition (pro residues). Residues 83-99 (QRSQRSNNRSSGCCSGC) show a composition bias toward low complexity.

The chain is Cysteine-rich C-terminal protein 1 (CRCT1) from Homo sapiens (Human).